The sequence spans 573 residues: Ascochitine biosynthesis cluster transcriptional regulator (573 aa).

Its subcellular location is the nucleus. Transcription factor that regulates the expression of the gene cluster that mediates the biosynthesis of the mycotoxin ascochitine, an o-quinone methide that plays a possible protective role against other microbial competitors in nature and is considered to be important for pathogenicity of legume-associated Didymella species. The protein is Ascochitine biosynthesis cluster transcriptional regulator of Didymella fabae (Leaf and pod spot disease fungus).